Consider the following 2726-residue polypeptide: Filamin-C (2726 aa).

An actin-binding region spans residues 1 to 260 (MMNNSNYSDA…VMTYLSQFPK (260 aa)). At Ser-5 the chain carries Phosphoserine. Calponin-homology (CH) domains are found at residues 37–143 (KIQQ…LHYS) and 160–263 (QTPK…KAKL). 15 Filamin repeats span residues 271–369 (SKQL…EVNV), 371–469 (MALG…PVHV), 470–566 (AEAC…EVQV), 567–659 (SPEA…IAHI), 663–759 (PPDC…RVNV), 760–862 (GEGS…HIKV), 863–961 (DPSH…VVNV), 962–1057 (APPL…AVEG), 1058–1150 (VLPP…KATI), 1151–1245 (QPVF…RVHV), 1246–1345 (QPAV…RVGV), 1346–1438 (TEGC…RVPV), 1439–1534 (KDVV…KIKV), 1535–1631 (LPAH…RIHA), and 1636–1735 (DASK…HVLA). Arg-1003 carries the post-translational modification Omega-N-methylarginine. A phosphoserine mark is found at Ser-1162 and Ser-1339. A hinge 1 region spans residues 1736–1759 (CDPLPHVEEPAEVLQLHQPYAPLR). Filamin repeat units lie at residues 1760–1854 (PGTC…LQFY), 1855–1947 (VDAI…TAKI), 1948–2034 (TGDD…KILV), and 2037–2129 (SEIG…TVKV). A Phosphoserine modification is found at Ser-2043. The interval 2163–2244 (GNWFQMVSAQ…FGSITRQQEG (82 aa)) is intradomain insert; mediate targeting to Z lines. Positions 2194–2210 (ISKTRGGETKREVRVEE) are enriched in basic and acidic residues. Positions 2194-2214 (ISKTRGGETKREVRVEESTQV) are disordered. Residues Ser-2234 and Ser-2237 each carry the phosphoserine modification. At Thr-2239 the chain carries Phosphothreonine. Over residues 2241–2260 (QQEGEASSQDMTAQVTSPSG) the composition is skewed to polar residues. The segment at 2241–2261 (QQEGEASSQDMTAQVTSPSGK) is disordered. Residues 2245–2307 (EASSQDMTAQ…VPGSPFQFTV (63 aa)) form a Filamin 20; mediates interaction with XIRP1 repeat. Filamin repeat units follow at residues 2310–2402 (LGEG…VVPV), 2404–2497 (SLSD…KIRV), and 2501–2593 (SQAG…KAKV). The interaction with INPPL1 stretch occupies residues 2404–2725 (SLSDDARRLT…VPGSPFKVNV (322 aa)). Phosphoserine is present on residues Ser-2587, Ser-2618, Ser-2621, Ser-2633, Ser-2715, and Ser-2719. Residues 2594–2630 (TGPRLSGGHSLHETSTVLVETVTKSSSSRGASYSSIP) form a hinge 2 region. The interval 2594 to 2726 (TGPRLSGGHS…PGSPFKVNVP (133 aa)) is self-association site, tail. A Filamin 24 repeat occupies 2631–2725 (KFSSDASKVV…VPGSPFKVNV (95 aa)).

Belongs to the filamin family. In terms of assembly, homodimer; the filamin repeat 24 and the second hinge domain are important for dimer formation. Interacts with FLNB, KCND2, INPPL1, ITGB1A, MYOT, MYOZ1 and MYOZ3. Interacts with sarcoglycans SGCD and SGCG. Interacts (via filament repeats 17-18, 20-21 and 24) with USP25 (isoform USP25m only). Interacts with FBLIM1. Interacts with KY. Interacts with IGFN1. Interacts with MICALL2. Interacts with XIRP1; this interaction is mediated by filamin 20 repeat. Interacts with ANK3. Interacts with SYNPO2. Post-translationally, ubiquitinated by FBXL22, leading to proteasomal degradation.

It localises to the cytoplasm. The protein localises to the membrane. The protein resides in the cytoskeleton. Its subcellular location is the myofibril. It is found in the sarcomere. It localises to the z line. Its function is as follows. Muscle-specific filamin, which plays a central role in sarcomere assembly and organization. Critical for normal myogenesis, it probably functions as a large actin-cross-linking protein with structural functions at the Z lines in muscle cells. May be involved in reorganizing the actin cytoskeleton in response to signaling events. The sequence is that of Filamin-C (Flnc) from Rattus norvegicus (Rat).